Reading from the N-terminus, the 521-residue chain is Biotinidase (521 aa).

Residues 1–25 (MSGARTAHALVFLLGCSALALGVCS) form the signal peptide. The 280-residue stretch at 50-329 (NPLELSSRQQ…QGLVGTENTT (280 aa)) folds into the CN hydrolase domain. The active-site Proton acceptor is the glutamate 90. Residues asparagine 128 and asparagine 181 are each glycosylated (N-linked (GlcNAc...) asparagine). The Proton donor role is filled by lysine 190. Cysteine 223 (nucleophile) is an active-site residue. A glycan (N-linked (GlcNAc...) asparagine) is linked at asparagine 380.

Belongs to the carbon-nitrogen hydrolase superfamily. BTD/VNN family.

The protein resides in the secreted. The protein localises to the extracellular space. It carries out the reaction biocytin + H2O = biotin + L-lysine. The catalysed reaction is biotin amide + H2O = biotin + NH4(+). In terms of biological role, catalytic release of biotin from biocytin, the product of biotin-dependent carboxylases degradation. In Rattus norvegicus (Rat), this protein is Biotinidase.